Reading from the N-terminus, the 273-residue chain is Large ribosomal subunit protein uL2c (273 aa).

The span at 1-31 (MAIHLSKTSSPSTRNGAVNSQVKSNSRNRLI) shows a compositional bias: polar residues. 2 disordered regions span residues 1–53 (MAIH…GHRG) and 222–273 (MNPV…RRSK).

Belongs to the universal ribosomal protein uL2 family. Part of the 50S ribosomal subunit.

It is found in the plastid. It localises to the chloroplast. The protein is Large ribosomal subunit protein uL2c (rpl2) of Pisum sativum (Garden pea).